Reading from the N-terminus, the 178-residue chain is Large ribosomal subunit protein uL6 (178 aa).

Belongs to the universal ribosomal protein uL6 family. Part of the 50S ribosomal subunit.

This protein binds to the 23S rRNA, and is important in its secondary structure. It is located near the subunit interface in the base of the L7/L12 stalk, and near the tRNA binding site of the peptidyltransferase center. The polypeptide is Large ribosomal subunit protein uL6 (Streptococcus suis (strain 05ZYH33)).